We begin with the raw amino-acid sequence, 367 residues long: Chorismate synthase (367 aa).

Positions 48 and 54 each coordinate NADP(+). Residues 125–127 (RSS), 238–239 (NA), Gly-278, 293–297 (KPTSS), and Arg-319 contribute to the FMN site.

This sequence belongs to the chorismate synthase family. As to quaternary structure, homotetramer. Requires FMNH2 as cofactor.

It carries out the reaction 5-O-(1-carboxyvinyl)-3-phosphoshikimate = chorismate + phosphate. The protein operates within metabolic intermediate biosynthesis; chorismate biosynthesis; chorismate from D-erythrose 4-phosphate and phosphoenolpyruvate: step 7/7. Functionally, catalyzes the anti-1,4-elimination of the C-3 phosphate and the C-6 proR hydrogen from 5-enolpyruvylshikimate-3-phosphate (EPSP) to yield chorismate, which is the branch point compound that serves as the starting substrate for the three terminal pathways of aromatic amino acid biosynthesis. This reaction introduces a second double bond into the aromatic ring system. The sequence is that of Chorismate synthase from Stenotrophomonas maltophilia (strain R551-3).